We begin with the raw amino-acid sequence, 419 residues long: Pyrophosphate--fructose 6-phosphate 1-phosphotransferase (419 aa).

Diphosphate is bound at residue Gly-12. Position 107 (Asp-107) interacts with Mg(2+). Substrate-binding positions include 132 to 134 (TID), 178 to 180 (MGR), Glu-238, and 300 to 303 (YELR). Asp-134 acts as the Proton acceptor in catalysis.

It belongs to the phosphofructokinase type A (PFKA) family. PPi-dependent PFK group II subfamily. Clade 'Short' sub-subfamily. Homodimer. Requires Mg(2+) as cofactor. Co(2+) serves as cofactor. The cofactor is Mn(2+). It depends on Ni(2+) as a cofactor.

Its subcellular location is the cytoplasm. The enzyme catalyses beta-D-fructose 6-phosphate + diphosphate = beta-D-fructose 1,6-bisphosphate + phosphate + H(+). It participates in carbohydrate degradation; glycolysis; D-glyceraldehyde 3-phosphate and glycerone phosphate from D-glucose: step 3/4. Non-allosteric. Catalyzes the phosphorylation of D-fructose 6-phosphate, the first committing step of glycolysis. Uses inorganic phosphate (PPi) as phosphoryl donor instead of ATP like common ATP-dependent phosphofructokinases (ATP-PFKs), which renders the reaction reversible, and can thus function both in glycolysis and gluconeogenesis. Consistently, PPi-PFK can replace the enzymes of both the forward (ATP-PFK) and reverse (fructose-bisphosphatase (FBPase)) reactions. This Thermotoga maritima (strain ATCC 43589 / DSM 3109 / JCM 10099 / NBRC 100826 / MSB8) protein is Pyrophosphate--fructose 6-phosphate 1-phosphotransferase.